The primary structure comprises 72 residues: Protein Kish (72 aa).

The N-terminal stretch at Met1–Gly26 is a signal peptide. Residues Gln27–Arg53 lie on the Lumenal side of the membrane. Residues Ala54–Ser72 traverse the membrane as a helical segment.

The protein belongs to the KISH family.

The protein localises to the endoplasmic reticulum membrane. The protein resides in the golgi apparatus membrane. Involved in the early part of the secretory pathway. The polypeptide is Protein Kish (Saccharomyces cerevisiae (strain ATCC 204508 / S288c) (Baker's yeast)).